The chain runs to 290 residues: Transposon Ty3-G Gag polyprotein (290 aa).

Position 2 is an N-acetylserine (Ser2). The CCHC-type zinc finger occupies Arg265 to Ala282.

It localises to the cytoplasm. In terms of biological role, capsid protein (CA) is the structural component of the virus-like particle (VLP), forming the shell that encapsulates the retrotransposons dimeric RNA genome. Functionally, nucleocapsid protein p9 (NC) forms the nucleocore that coats the retro-elements dimeric RNA. Binds these RNAs through its zinc fingers. Promotes primer tRNA(i)-Met annealing to the multipartite primer-binding site (PBS), dimerization of Ty3 RNA and initiation of reverse transcription. The protein is Transposon Ty3-G Gag polyprotein (TY3A-G) of Saccharomyces cerevisiae (strain ATCC 204508 / S288c) (Baker's yeast).